We begin with the raw amino-acid sequence, 84 residues long: Large ribosomal subunit protein bL27 (84 aa).

The segment at 1 to 24 (MAHKKGGGSSKNGRDSNSQRLGVK) is disordered.

Belongs to the bacterial ribosomal protein bL27 family.

This chain is Large ribosomal subunit protein bL27, found in Leptospira borgpetersenii serovar Hardjo-bovis (strain JB197).